Here is a 687-residue protein sequence, read N- to C-terminus: MRQPLLKLAAVTRRFPAGDKDVVVLNNVNLSIHAGEIVAIVGASGSGKSTLMNILGCLDHPSEGTYTVGGRDTHMLDSDELAQLRREHFGFVFQRYHLLPHVDAVANLEMPAIYAGTPRAERHARARELLARLGLADRAHHRPGQLSGGQQQRVSIARALMNGGQVILADEPTGALDTKSGQDVIRILHELNALGHTIVIVTHDKAVARHAKRIIEISDGEIVADRPNRHYAEALAEAGVDAAEAAEASEAAVGESPTRNRHDTPAPPAAVDTDPHVDTGTRTRRFAAGSGRFAEACRMAWIALVSHRLRTLLTMLGIIIGITSVVSIVAIGEGAKRYMLDEIGSIGTNTINIYPGTDWGDSRADAIQTLVPADVAALTEQPYVDSATPETSRTLLLRYRNVDVNALVSGVGDRFFQARGMRFALGVAFDEDAVRRQVQVAVIDQNTRRKLFGATRNPIGEVILVDNVPCVVIGVTADKKSAFGSVKSLNVWVPYTTASGRLFGQRYLDSITVRVRDGQPSAAAEKSLEKLMTQRHGRKDFFTYNMDSVVKTVEKTGQSLTLLLSLIAVISLVVGGIGVMNIMLVSVTERTREIGIRMAVGARQSDILQQFLVEAVLVCLLGGTIGIALSFGLGALFSMFVAQWKMVFSAGAIVTAFVCSTLTGVIFGFMPARNASRLDPIDALARD.

The region spanning 6 to 244 (LKLAAVTRRF…LAEAGVDAAE (239 aa)) is the ABC transporter domain. 42 to 49 (GASGSGKS) contacts ATP. Positions 246-256 (AEASEAAVGES) are enriched in low complexity. The tract at residues 246-281 (AEASEAAVGESPTRNRHDTPAPPAAVDTDPHVDTGT) is disordered. 4 helical membrane passes run 312-332 (LLTM…VAIG), 560-580 (LTLL…IGVM), 617-637 (LVCL…GALF), and 650-670 (AGAI…FGFM).

The protein belongs to the ABC transporter superfamily. Macrolide exporter (TC 3.A.1.122) family. As to quaternary structure, homodimer.

The protein resides in the cell inner membrane. Its function is as follows. Non-canonical ABC transporter that contains transmembrane domains (TMD), which form a pore in the inner membrane, and an ATP-binding domain (NBD), which is responsible for energy generation. Confers resistance against macrolides. The protein is Macrolide export ATP-binding/permease protein MacB of Burkholderia lata (strain ATCC 17760 / DSM 23089 / LMG 22485 / NCIMB 9086 / R18194 / 383).